Consider the following 550-residue polypeptide: Leucine-rich repeat LGI family member 2 (550 aa).

The signal sequence occupies residues 1 to 25 (MALWRGGGALGLLLLSAACLIPPSA). One can recognise an LRRNT domain in the interval 26 to 62 (QVRRLARCPATCSCTKESIICVGSSWVPRIVPGDISS). N-linked (GlcNAc...) asparagine glycosylation is present at N67. 2 LRR repeats span residues 83 to 104 (SLQL…AFAG) and 107 to 128 (HLEY…AFRG). Residues 140–190 (NKFECDCKAKWLYLWLKMTNSTVSDVLCIGPPEYQEKKLNEVTSFDYECTT) enclose the LRRCT domain. N159 carries N-linked (GlcNAc...) asparagine glycosylation. EAR repeat units lie at residues 224–266 (DFVV…EWDH), 270–312 (NFRS…KYDE), 316–363 (KFVK…KWNS), 365–408 (GFYS…QWNK), 412–455 (KFVP…RWNS), 457–499 (QFVE…QWDK), and 503–545 (QFKK…EHII). N276 carries N-linked (GlcNAc...) asparagine glycosylation. N407 is a glycosylation site (N-linked (GlcNAc...) asparagine).

In terms of tissue distribution, brain.

The protein localises to the secreted. Required for the development of soma-targeting inhibitory GABAergic synapses made by parvalbumin-positive basket cells. This chain is Leucine-rich repeat LGI family member 2 (Lgi2), found in Mus musculus (Mouse).